The primary structure comprises 163 residues: MRCVQCGHLEDKVIDSRMSKDGTTIRRRRVCLRCDYRYTTYEQIERTELRVVKRDNLREALNREKILRGLVKACEKRPVSMDRLDRAVEEIISELHRDHLREVPSSEIGKKVIEKLYAIDPVAYIRYVSVYRQFSNVEEFIQEITQMRHQTLIDPLQRKLPIL.

A zinc finger spans residues cysteine 3 to cysteine 34. The region spanning leucine 49 to glutamate 139 is the ATP-cone domain.

The protein belongs to the NrdR family. Requires Zn(2+) as cofactor.

Functionally, negatively regulates transcription of bacterial ribonucleotide reductase nrd genes and operons by binding to NrdR-boxes. The chain is Transcriptional repressor NrdR from Akkermansia muciniphila (strain ATCC BAA-835 / DSM 22959 / JCM 33894 / BCRC 81048 / CCUG 64013 / CIP 107961 / Muc).